The sequence spans 109 residues: Cytochrome c (109 aa).

4 residues coordinate heme c: Cys25, Cys28, His29, and Met88.

This sequence belongs to the cytochrome c family. Post-translationally, binds 1 heme c group covalently per subunit.

It localises to the mitochondrion intermembrane space. In terms of biological role, electron carrier protein. The oxidized form of the cytochrome c heme group can accept an electron from the heme group of the cytochrome c1 subunit of cytochrome reductase. Cytochrome c then transfers this electron to the cytochrome oxidase complex, the final protein carrier in the mitochondrial electron-transport chain. The protein is Cytochrome c of Tetrahymena pyriformis.